Here is a 267-residue protein sequence, read N- to C-terminus: Small ribosomal subunit protein uS2 (267 aa).

The segment at 234 to 267 (DNAEEELAEAISQEEPSAAEELPDDMADNENEFE) is disordered. Residues 250 to 267 (SAAEELPDDMADNENEFE) show a composition bias toward acidic residues.

The protein belongs to the universal ribosomal protein uS2 family.

This chain is Small ribosomal subunit protein uS2, found in Dichelobacter nodosus (strain VCS1703A).